Reading from the N-terminus, the 628-residue chain is Siderophore iron transporter 1 (628 aa).

A run of 14 helical transmembrane segments spans residues 68–88, 107–127, 132–152, 164–184, 194–214, 225–245, 285–305, 317–337, 354–374, 394–414, 420–440, 448–468, 488–508, and 559–579; these read IYRV…GLDG, LLST…IFFA, IFGR…GTII, VGGC…EVIA, LLAL…SGNV, GIGM…ICML, IIGM…FTLA, IIVP…LWEI, GIFF…MQGD, ITSL…FILI, KPFI…LVHY, SGII…TYVT, LYLA…GAVW, and KILC…AFML.

Belongs to the major facilitator superfamily.

Its subcellular location is the endosome membrane. Functionally, involved in the transport of siderophore ferrioxamine B and so has a role in iron homeostasis. This Saccharomyces cerevisiae (strain ATCC 204508 / S288c) (Baker's yeast) protein is Siderophore iron transporter 1 (SIT1).